A 124-amino-acid polypeptide reads, in one-letter code: Group 1 truncated hemoglobin GlbN (124 aa).

Heme-binding residues include His46, His70, and His117.

The protein belongs to the truncated hemoglobin family. Group I subfamily. As to quaternary structure, monomer. The cofactor is heme.

Forms a very stable complex with oxygen. The oxygen dissociation rate is 0.011 sec(-1). This Synechocystis sp. (strain ATCC 27184 / PCC 6803 / Kazusa) protein is Group 1 truncated hemoglobin GlbN (glbN).